The chain runs to 514 residues: 2-isopropylmalate synthase (514 aa).

Residues 5 to 268 (LIIFDTTLRD…DVGIDTSQIV (264 aa)) enclose the Pyruvate carboxyltransferase domain. Mn(2+) contacts are provided by Asp-14, His-202, His-204, and Asn-239. The regulatory domain stretch occupies residues 395-514 (KFVSLSQRSE…KDDKVNPQRS (120 aa)).

Belongs to the alpha-IPM synthase/homocitrate synthase family. LeuA type 1 subfamily. As to quaternary structure, homodimer. Mn(2+) serves as cofactor.

It localises to the cytoplasm. It carries out the reaction 3-methyl-2-oxobutanoate + acetyl-CoA + H2O = (2S)-2-isopropylmalate + CoA + H(+). It functions in the pathway amino-acid biosynthesis; L-leucine biosynthesis; L-leucine from 3-methyl-2-oxobutanoate: step 1/4. In terms of biological role, catalyzes the condensation of the acetyl group of acetyl-CoA with 3-methyl-2-oxobutanoate (2-ketoisovalerate) to form 3-carboxy-3-hydroxy-4-methylpentanoate (2-isopropylmalate). The polypeptide is 2-isopropylmalate synthase (Burkholderia cenocepacia (strain ATCC BAA-245 / DSM 16553 / LMG 16656 / NCTC 13227 / J2315 / CF5610) (Burkholderia cepacia (strain J2315))).